The primary structure comprises 100 residues: U-myrmeciitoxin(01)-Mg7b (100 aa).

The first 17 residues, 1–17 (MKLSCLSLALAIILVLA), serve as a signal peptide directing secretion. The propeptide occupies 18–50 (IVYSPHMEVKALADAEPDAIGFADAFGEADAEP). O-linked (GalNAc...) serine glycosylation occurs at serine 85. O-linked (GalNAc...) threonine glycans are attached at residues threonine 94 and threonine 95.

The protein belongs to the formicidae venom precursor-01 superfamily. In terms of processing, glycosylation is critical to maintaining the aqueous solubility of this protein, but does not directly contribute to its activity. Expressed by the venom gland.

It localises to the secreted. The protein localises to the target cell membrane. Its function is as follows. Neurotoxin that triggers pain behavior and inflammation in mammals, and is paralytic and lethal to insects. Causes a time-dependent increase in cell leak current. May act by targeting membranes. This chain is U-myrmeciitoxin(01)-Mg7b, found in Myrmecia gulosa (Red bulldog ant).